The sequence spans 362 residues: Peptide chain release factor 1 (362 aa).

The residue at position 237 (Gln-237) is an N5-methylglutamine.

Belongs to the prokaryotic/mitochondrial release factor family. In terms of processing, methylated by PrmC. Methylation increases the termination efficiency of RF1.

It is found in the cytoplasm. Its function is as follows. Peptide chain release factor 1 directs the termination of translation in response to the peptide chain termination codons UAG and UAA. The protein is Peptide chain release factor 1 of Aeromonas salmonicida (strain A449).